The sequence spans 233 residues: Mediator of RNA polymerase II transcription subunit 7 (233 aa).

K185 is covalently cross-linked (Glycyl lysine isopeptide (Lys-Gly) (interchain with G-Cter in SUMO1); alternate). K185 participates in a covalent cross-link: Glycyl lysine isopeptide (Lys-Gly) (interchain with G-Cter in SUMO2); alternate. Residues K185–D213 are disordered. S194 carries the phosphoserine modification. The segment covering Q203 to D213 has biased composition (basic and acidic residues).

Belongs to the Mediator complex subunit 7 family. Component of the Mediator complex, which is composed of MED1, MED4, MED6, MED7, MED8, MED9, MED10, MED11, MED12, MED13, MED13L, MED14, MED15, MED16, MED17, MED18, MED19, MED20, MED21, MED22, MED23, MED24, MED25, MED26, MED27, MED29, MED30, MED31, CCNC, CDK8 and CDC2L6/CDK11. The MED12, MED13, CCNC and CDK8 subunits form a distinct module termed the CDK8 module. Mediator containing the CDK8 module is less active than Mediator lacking this module in supporting transcriptional activation. Individual preparations of the Mediator complex lacking one or more distinct subunits have been variously termed ARC, CRSP, DRIP, PC2, SMCC and TRAP.

The protein localises to the nucleus. Its function is as follows. Component of the Mediator complex, a coactivator involved in the regulated transcription of nearly all RNA polymerase II-dependent genes. Mediator functions as a bridge to convey information from gene-specific regulatory proteins to the basal RNA polymerase II transcription machinery. Mediator is recruited to promoters by direct interactions with regulatory proteins and serves as a scaffold for the assembly of a functional preinitiation complex with RNA polymerase II and the general transcription factors. In Bos taurus (Bovine), this protein is Mediator of RNA polymerase II transcription subunit 7 (MED7).